We begin with the raw amino-acid sequence, 581 residues long: Arginine--tRNA ligase (581 aa).

Residues 126–136 (PNLAKEMHVGH) carry the 'HIGH' region motif.

It belongs to the class-I aminoacyl-tRNA synthetase family. In terms of assembly, monomer.

It localises to the cytoplasm. The catalysed reaction is tRNA(Arg) + L-arginine + ATP = L-arginyl-tRNA(Arg) + AMP + diphosphate. This is Arginine--tRNA ligase from Shewanella loihica (strain ATCC BAA-1088 / PV-4).